A 122-amino-acid polypeptide reads, in one-letter code: UPF0482 protein Spro_2288 (122 aa).

The first 31 residues, 1 to 31 (MKTLSTQRLLRGMLPVAMLMLMGAWQAPALA), serve as a signal peptide directing secretion. Residues 46–71 (SNSGAMSTEAARQSKQQFNDTKSLRN) are disordered.

Belongs to the UPF0482 family.

In Serratia proteamaculans (strain 568), this protein is UPF0482 protein Spro_2288.